Consider the following 742-residue polypeptide: Clamp-binding protein CrfC (742 aa).

Residues 41 to 45 (QLALP) form a clamp-binding consensus region. The region spanning 66-402 (SRLEMVLAIV…LWEDSLFAQP (337 aa)) is the Dynamin-type G domain. The interval 76-83 (GTMKAGKS) is G1 motif. The G2 motif stretch occupies residues 102 to 104 (MTA). The G3 motif stretch occupies residues 236–239 (DTPG). Positions 297 to 300 (NKFD) are G4 motif. Residues 331–334 (FPVS) form a G5 motif region. Residues 440–472 (RAHGLNVACEQLRQNIHQVEESLQLLQLNQAQV) adopt a coiled-coil conformation.

The protein belongs to the TRAFAC class dynamin-like GTPase superfamily. Dynamin/Fzo/YdjA family. Forms homooligomers. Binds to the beta sliding clamp processivity factor (DnaN) in the presence and absence of DNA, may bind to the clamp itself as homodimers or trimers. Homooligomers may be able to bind more than 1 clamp complex.

It is found in the cytoplasm. Its function is as follows. Important for the colocalization of sister nascent DNA strands after replication fork passage during DNA replication, and for positioning and subsequent partitioning of sister chromosomes. Does not have GTPase activity on its own. This Escherichia coli protein is Clamp-binding protein CrfC (crfC).